Here is a 277-residue protein sequence, read N- to C-terminus: 2-dehydro-3-deoxyphosphooctonate aldolase (277 aa).

This sequence belongs to the KdsA family.

It localises to the cytoplasm. It catalyses the reaction D-arabinose 5-phosphate + phosphoenolpyruvate + H2O = 3-deoxy-alpha-D-manno-2-octulosonate-8-phosphate + phosphate. It participates in carbohydrate biosynthesis; 3-deoxy-D-manno-octulosonate biosynthesis; 3-deoxy-D-manno-octulosonate from D-ribulose 5-phosphate: step 2/3. Its pathway is bacterial outer membrane biogenesis; lipopolysaccharide biosynthesis. This Brucella abortus (strain S19) protein is 2-dehydro-3-deoxyphosphooctonate aldolase.